Consider the following 215-residue polypeptide: Large ribosomal subunit protein bL25 (215 aa).

2 stretches are compositionally biased toward polar residues: residues Met-1–Lys-19 and Glu-206–Glu-215. Disordered stretches follow at residues Met-1–Gly-29 and Ala-190–Glu-215.

Belongs to the bacterial ribosomal protein bL25 family. CTC subfamily. Part of the 50S ribosomal subunit; part of the 5S rRNA/L5/L18/L25 subcomplex. Contacts the 5S rRNA. Binds to the 5S rRNA independently of L5 and L18.

Its function is as follows. This is one of the proteins that binds to the 5S RNA in the ribosome where it forms part of the central protuberance. This is Large ribosomal subunit protein bL25 from Mycobacterium leprae (strain TN).